The following is a 612-amino-acid chain: MFS siderochrome iron transporter B (612 aa).

Residues 1-86 are Cytoplasmic-facing; it reads MLHVLSVGPS…GAQAGVKKIE (86 aa). Residues 55–78 form a disordered region; that stretch reads DKEAAHAPANAETNNEEANPSDGA. Positions 60–72 are enriched in low complexity; sequence HAPANAETNNEEA. The chain crosses the membrane as a helical span at residues 87-104; the sequence is AVTLSWTRGTAIWFLTLV. The Extracellular segment spans residues 105–127; that stretch reads NDFRLSMYTSLNAYATSSFLGHS. Residues 128–148 form a helical membrane-spanning segment; it reads LLTVINIVSYVMGGSVYIPMA. At 149-156 the chain is on the cytoplasmic side; that stretch reads KALDLWGR. The helical transmembrane segment at 157–177 threads the bilayer; it reads AEGFLLMTFFCILGLILLASS. The Extracellular segment spans residues 178 to 187; the sequence is QNLPTYCAGQ. Residues 188-208 form a helical membrane-spanning segment; the sequence is VFYKVGFGGLSYTWNVLAADV. Over 209–215 the chain is Cytoplasmic; the sequence is TNLRNRG. A helical membrane pass occupies residues 216–236; sequence LAFAFTSSPALISAFAGSKAA. The Extracellular portion of the chain corresponds to 237–246; that stretch reads SDLLAHSTWR. A helical transmembrane segment spans residues 247–267; sequence WGFGMWAIILPVVALPIYGLL. Topologically, residues 268-302 are cytoplasmic; sequence AYHLRQAEKKGVLVKETRDWSITPKTVWWAIMEFD. Residues 303 to 323 form a helical membrane-spanning segment; that stretch reads LPGVLLFAGGFVIFLLPFTLA. Residues 324 to 334 lie on the Extracellular side of the membrane; it reads ATAPHGYQTDY. A helical transmembrane segment spans residues 335–355; that stretch reads IIAMITLGLALIIAFGFYEML. The Cytoplasmic segment spans residues 356 to 370; that stretch reads VAPVPFLNYKFLIDR. Residues 371–393 form a helical membrane-spanning segment; that stretch reads TVLGACLLDMTYQVSYYCYASYL. Residues 394-409 lie on the Extracellular side of the membrane; sequence PSFLQVVYELDVATAG. The helical transmembrane segment at 410–430 threads the bilayer; it reads YVTNTFSVVSFVFLFFAGWLI. At 431–435 the chain is on the cytoplasmic side; sequence RWTGR. Residues 436–456 form a helical membrane-spanning segment; the sequence is FKWILWVCVPLYIFGLGLMIH. Residues 457 to 463 lie on the Extracellular side of the membrane; it reads FRQPGGY. The helical transmembrane segment at 464–484 threads the bilayer; that stretch reads IGYIVMCEIFFSVAGSVFILC. Over 485 to 498 the chain is Cytoplasmic; it reads VQLAVLASVDHQHV. Residues 499-519 form a helical membrane-spanning segment; it reads AAVLALLFVMGSIGGSIGSAI. Residues 520 to 575 are Extracellular-facing; the sequence is CGAIWTSTFLSRLERNLPASAMPDLSLIYSSLPTQLSYPVGSATRTAIVEAYGYAQ. Residues 576-596 traverse the membrane as a helical segment; sequence ARMLIAGTAFMVLGFIWVGMM. Topologically, residues 597 to 612 are cytoplasmic; the sequence is RNLNVKNMTQTKGNVV.

Belongs to the major facilitator superfamily.

Its subcellular location is the cell tip. The protein localises to the cytoplasmic vesicle membrane. The protein resides in the cell membrane. Functionally, major facilitator transporter involved in triacetylfusarinine C (TAFC) uptake. Can also transport ferricrocin and coprogen, but not ferrichrysin. MirB plays a crucial role for virulence in a murine model of pulmonary aspergillosis, indicating that TAFC-mediated iron uptake plays a dominant role during infection. In Aspergillus fumigatus (strain ATCC MYA-4609 / CBS 101355 / FGSC A1100 / Af293) (Neosartorya fumigata), this protein is MFS siderochrome iron transporter B.